The chain runs to 300 residues: NAD kinase (300 aa).

D75 functions as the Proton acceptor in the catalytic mechanism. Residues D75–G76, N149–D150, R177, D179, T190–S195, A214, and Q248 each bind NAD(+).

Belongs to the NAD kinase family. It depends on a divalent metal cation as a cofactor.

The protein resides in the cytoplasm. The catalysed reaction is NAD(+) + ATP = ADP + NADP(+) + H(+). In terms of biological role, involved in the regulation of the intracellular balance of NAD and NADP, and is a key enzyme in the biosynthesis of NADP. Catalyzes specifically the phosphorylation on 2'-hydroxyl of the adenosine moiety of NAD to yield NADP. This Paraburkholderia phymatum (strain DSM 17167 / CIP 108236 / LMG 21445 / STM815) (Burkholderia phymatum) protein is NAD kinase.